A 429-amino-acid polypeptide reads, in one-letter code: Ribosomal RNA small subunit methyltransferase B (429 aa).

S-adenosyl-L-methionine-binding positions include 254 to 260 (CAAPGGK), D277, D303, and D322. C375 (nucleophile) is an active-site residue.

This sequence belongs to the class I-like SAM-binding methyltransferase superfamily. RsmB/NOP family.

The protein localises to the cytoplasm. The catalysed reaction is cytidine(967) in 16S rRNA + S-adenosyl-L-methionine = 5-methylcytidine(967) in 16S rRNA + S-adenosyl-L-homocysteine + H(+). Specifically methylates the cytosine at position 967 (m5C967) of 16S rRNA. This chain is Ribosomal RNA small subunit methyltransferase B, found in Erwinia tasmaniensis (strain DSM 17950 / CFBP 7177 / CIP 109463 / NCPPB 4357 / Et1/99).